Reading from the N-terminus, the 315-residue chain is tRNA dimethylallyltransferase (315 aa).

14 to 21 contributes to the ATP binding site; that stretch reads GPTASGKT. 16-21 is a substrate binding site; sequence TASGKT. 3 interaction with substrate tRNA regions span residues 39–42, 163–167, and 248–253; these read DSAL, QRIQR, and RCVGYR.

Belongs to the IPP transferase family. As to quaternary structure, monomer. Mg(2+) is required as a cofactor.

It catalyses the reaction adenosine(37) in tRNA + dimethylallyl diphosphate = N(6)-dimethylallyladenosine(37) in tRNA + diphosphate. Catalyzes the transfer of a dimethylallyl group onto the adenine at position 37 in tRNAs that read codons beginning with uridine, leading to the formation of N6-(dimethylallyl)adenosine (i(6)A). This Paraburkholderia xenovorans (strain LB400) protein is tRNA dimethylallyltransferase.